The primary structure comprises 413 residues: Multifunctional CCA protein (413 aa).

Residues Gly-8 and Arg-11 each coordinate ATP. CTP is bound by residues Gly-8 and Arg-11. Positions 21 and 23 each coordinate Mg(2+). Positions 91, 137, and 140 each coordinate ATP. 3 residues coordinate CTP: Arg-91, Arg-137, and Arg-140. One can recognise an HD domain in the interval 228-329 (TGVHTLMTLS…VKLFDAIDAW (102 aa)).

The protein belongs to the tRNA nucleotidyltransferase/poly(A) polymerase family. Bacterial CCA-adding enzyme type 1 subfamily. In terms of assembly, monomer. Can also form homodimers and oligomers. Mg(2+) is required as a cofactor. Ni(2+) serves as cofactor.

The enzyme catalyses a tRNA precursor + 2 CTP + ATP = a tRNA with a 3' CCA end + 3 diphosphate. It carries out the reaction a tRNA with a 3' CCA end + 2 CTP + ATP = a tRNA with a 3' CCACCA end + 3 diphosphate. In terms of biological role, catalyzes the addition and repair of the essential 3'-terminal CCA sequence in tRNAs without using a nucleic acid template. Adds these three nucleotides in the order of C, C, and A to the tRNA nucleotide-73, using CTP and ATP as substrates and producing inorganic pyrophosphate. tRNA 3'-terminal CCA addition is required both for tRNA processing and repair. Also involved in tRNA surveillance by mediating tandem CCA addition to generate a CCACCA at the 3' terminus of unstable tRNAs. While stable tRNAs receive only 3'-terminal CCA, unstable tRNAs are marked with CCACCA and rapidly degraded. This is Multifunctional CCA protein from Salmonella choleraesuis (strain SC-B67).